The following is a 130-amino-acid chain: Histone H2A type 2-B (130 aa).

Positions 1–22 (MSGRGKQGGKARAKAKSRSSRA) are disordered. An N-acetylserine modification is found at Ser-2. At Ser-2 the chain carries Phosphoserine; by RPS6KA5. Arg-4 carries the citrulline; alternate modification. At Arg-4 the chain carries Symmetric dimethylarginine; by PRMT5; alternate. Residues Lys-6 and Lys-10 each carry the N6-(2-hydroxyisobutyryl)lysine; alternate modification. Lys-6 is modified (N6-(beta-hydroxybutyryl)lysine; alternate). Residues 7-19 (QGGKARAKAKSRS) are compositionally biased toward basic residues. Lys-10 is subject to N6-lactoyllysine; alternate. Lys-10 carries the N6-succinyllysine; alternate modification. Residues Lys-14 and Lys-16 each participate in a glycyl lysine isopeptide (Lys-Gly) (interchain with G-Cter in ubiquitin) cross-link. An N6-(2-hydroxyisobutyryl)lysine; alternate modification is found at Lys-37. Position 37 is an N6-(beta-hydroxybutyryl)lysine; alternate (Lys-37). Lys-37 is subject to N6-crotonyllysine; alternate. Lys-75 and Lys-76 each carry N6-(2-hydroxyisobutyryl)lysine. The residue at position 96 (Lys-96) is an N6-(2-hydroxyisobutyryl)lysine; alternate. Lys-96 bears the N6-succinyllysine; alternate mark. Position 96 is an N6-glutaryllysine; alternate (Lys-96). Position 105 is an N5-methylglutamine (Gln-105). N6-(2-hydroxyisobutyryl)lysine; alternate is present on Lys-119. Residues Lys-119 and Lys-120 each carry the N6-crotonyllysine; alternate modification. Residues Lys-119 and Lys-120 each carry the N6-glutaryllysine; alternate modification. Lys-120 is modified (N6-(beta-hydroxybutyryl)lysine; alternate). Residue Lys-120 forms a Glycyl lysine isopeptide (Lys-Gly) (interchain with G-Cter in ubiquitin); alternate linkage. Thr-121 bears the Phosphothreonine; by DCAF1 mark.

It belongs to the histone H2A family. As to quaternary structure, the nucleosome is a histone octamer containing two molecules each of H2A, H2B, H3 and H4 assembled in one H3-H4 heterotetramer and two H2A-H2B heterodimers. The octamer wraps approximately 147 bp of DNA. Deiminated on Arg-4 in granulocytes upon calcium entry. Post-translationally, monoubiquitination of Lys-120 (H2AK119Ub) by RING1, TRIM37 and RNF2/RING2 complex gives a specific tag for epigenetic transcriptional repression and participates in X chromosome inactivation of female mammals. It is involved in the initiation of both imprinted and random X inactivation. Ubiquitinated H2A is enriched in inactive X chromosome chromatin. Ubiquitination of H2A functions downstream of methylation of 'Lys-27' of histone H3 (H3K27me). H2AK119Ub by RNF2/RING2 can also be induced by ultraviolet and may be involved in DNA repair. Following DNA double-strand breaks (DSBs), it is ubiquitinated through 'Lys-63' linkage of ubiquitin moieties by the E2 ligase UBE2N and the E3 ligases RNF8 and RNF168, leading to the recruitment of repair proteins to sites of DNA damage. Ubiquitination at Lys-14 and Lys-16 (H2AK13Ub and H2AK15Ub, respectively) in response to DNA damage is initiated by RNF168 that mediates monoubiquitination at these 2 sites, and 'Lys-63'-linked ubiquitin are then conjugated to monoubiquitin; RNF8 is able to extend 'Lys-63'-linked ubiquitin chains in vitro. Deubiquitinated by USP51 at Lys-14 and Lys-16 (H2AK13Ub and H2AK15Ub, respectively) after damaged DNA is repaired. H2AK119Ub and ionizing radiation-induced 'Lys-63'-linked ubiquitination (H2AK13Ub and H2AK15Ub) are distinct events. In terms of processing, phosphorylation on Ser-2 (H2AS1ph) is enhanced during mitosis. Phosphorylation on Ser-2 by RPS6KA5/MSK1 directly represses transcription. Acetylation of H3 inhibits Ser-2 phosphorylation by RPS6KA5/MSK1. Phosphorylation at Thr-121 (H2AT120ph) by DCAF1 is present in the regulatory region of many tumor suppresor genes and down-regulates their transcription. Symmetric dimethylation on Arg-4 by the PRDM1/PRMT5 complex may play a crucial role in the germ-cell lineage. Post-translationally, glutamine methylation at Gln-105 (H2AQ104me) by FBL is specifically dedicated to polymerase I. It is present at 35S ribosomal DNA locus and impairs binding of the FACT complex. In terms of processing, crotonylation (Kcr) is specifically present in male germ cells and marks testis-specific genes in post-meiotic cells, including X-linked genes that escape sex chromosome inactivation in haploid cells. Crotonylation marks active promoters and enhancers and confers resistance to transcriptional repressors. It is also associated with post-meiotically activated genes on autosomes. Hydroxybutyrylation of histones is induced by starvation. Post-translationally, lactylated in macrophages by EP300/P300 by using lactoyl-CoA directly derived from endogenous or exogenous lactate, leading to stimulates gene transcription.

Its subcellular location is the nucleus. It is found in the chromosome. In terms of biological role, core component of nucleosome. Nucleosomes wrap and compact DNA into chromatin, limiting DNA accessibility to the cellular machineries which require DNA as a template. Histones thereby play a central role in transcription regulation, DNA repair, DNA replication and chromosomal stability. DNA accessibility is regulated via a complex set of post-translational modifications of histones, also called histone code, and nucleosome remodeling. This is Histone H2A type 2-B from Mus musculus (Mouse).